A 348-amino-acid chain; its full sequence is Holliday junction branch migration complex subunit RuvB (348 aa).

A large ATPase domain (RuvB-L) region spans residues 1–184 (MTLNRDMVSP…FGIVQRLEFY (184 aa)). Leu-23, Arg-24, Gly-65, Lys-68, Thr-69, Thr-70, Arg-174, Tyr-184, and Arg-221 together coordinate ATP. Residue Thr-69 coordinates Mg(2+). The small ATPAse domain (RuvB-S) stretch occupies residues 185–255 (AVDHLVLIVE…VAQKALDLLD (71 aa)). The tract at residues 258–348 (SHGFDTMDRK…QEVSDLFPNE (91 aa)) is head domain (RuvB-H). 3 residues coordinate DNA: Arg-294, Arg-313, and Arg-318.

The protein belongs to the RuvB family. In terms of assembly, homohexamer. Forms an RuvA(8)-RuvB(12)-Holliday junction (HJ) complex. HJ DNA is sandwiched between 2 RuvA tetramers; dsDNA enters through RuvA and exits via RuvB. An RuvB hexamer assembles on each DNA strand where it exits the tetramer. Each RuvB hexamer is contacted by two RuvA subunits (via domain III) on 2 adjacent RuvB subunits; this complex drives branch migration. In the full resolvosome a probable DNA-RuvA(4)-RuvB(12)-RuvC(2) complex forms which resolves the HJ.

The protein resides in the cytoplasm. It carries out the reaction ATP + H2O = ADP + phosphate + H(+). Its function is as follows. The RuvA-RuvB-RuvC complex processes Holliday junction (HJ) DNA during genetic recombination and DNA repair, while the RuvA-RuvB complex plays an important role in the rescue of blocked DNA replication forks via replication fork reversal (RFR). RuvA specifically binds to HJ cruciform DNA, conferring on it an open structure. The RuvB hexamer acts as an ATP-dependent pump, pulling dsDNA into and through the RuvAB complex. RuvB forms 2 homohexamers on either side of HJ DNA bound by 1 or 2 RuvA tetramers; 4 subunits per hexamer contact DNA at a time. Coordinated motions by a converter formed by DNA-disengaged RuvB subunits stimulates ATP hydrolysis and nucleotide exchange. Immobilization of the converter enables RuvB to convert the ATP-contained energy into a lever motion, pulling 2 nucleotides of DNA out of the RuvA tetramer per ATP hydrolyzed, thus driving DNA branch migration. The RuvB motors rotate together with the DNA substrate, which together with the progressing nucleotide cycle form the mechanistic basis for DNA recombination by continuous HJ branch migration. Branch migration allows RuvC to scan DNA until it finds its consensus sequence, where it cleaves and resolves cruciform DNA. This Nitrosococcus oceani (strain ATCC 19707 / BCRC 17464 / JCM 30415 / NCIMB 11848 / C-107) protein is Holliday junction branch migration complex subunit RuvB.